The chain runs to 289 residues: 4-diphosphocytidyl-2-C-methyl-D-erythritol kinase (289 aa).

Lys-16 is a catalytic residue. Residue 99 to 109 participates in ATP binding; the sequence is PMGGGIGGGSS. Asp-141 is a catalytic residue.

This sequence belongs to the GHMP kinase family. IspE subfamily.

The enzyme catalyses 4-CDP-2-C-methyl-D-erythritol + ATP = 4-CDP-2-C-methyl-D-erythritol 2-phosphate + ADP + H(+). It participates in isoprenoid biosynthesis; isopentenyl diphosphate biosynthesis via DXP pathway; isopentenyl diphosphate from 1-deoxy-D-xylulose 5-phosphate: step 3/6. Its function is as follows. Catalyzes the phosphorylation of the position 2 hydroxy group of 4-diphosphocytidyl-2C-methyl-D-erythritol. The sequence is that of 4-diphosphocytidyl-2-C-methyl-D-erythritol kinase from Ralstonia nicotianae (strain ATCC BAA-1114 / GMI1000) (Ralstonia solanacearum).